The primary structure comprises 392 residues: Galactokinase (392 aa).

Position 33-36 (33-36) interacts with substrate; the sequence is EHTD. Residues serine 67 and 129-135 each bind ATP; that span reads GSGLSSS. Mg(2+) is bound by residues serine 135 and glutamate 167. Aspartate 179 (proton acceptor) is an active-site residue. Residue tyrosine 229 coordinates substrate.

This sequence belongs to the GHMP kinase family. GalK subfamily.

It is found in the cytoplasm. The enzyme catalyses alpha-D-galactose + ATP = alpha-D-galactose 1-phosphate + ADP + H(+). It participates in carbohydrate metabolism; galactose metabolism. Catalyzes the transfer of the gamma-phosphate of ATP to D-galactose to form alpha-D-galactose-1-phosphate (Gal-1-P). This is Galactokinase from Limosilactobacillus reuteri (strain DSM 20016) (Lactobacillus reuteri).